The primary structure comprises 467 residues: Chromosomal replication initiator protein DnaA (467 aa).

A domain I, interacts with DnaA modulators region spans residues 1–85 (MTTTLWPQVL…LEVGEYAIES (85 aa)). The tract at residues 85 to 130 (SFNEPENTSVPQPLRETKAEREAAEKAASSTSKKKSDSPPKKTIKH) is domain II. The segment at 87–129 (NEPENTSVPQPLRETKAEREAAEKAASSTSKKKSDSPPKKTIK) is disordered. Positions 99-109 (RETKAEREAAE) are enriched in basic and acidic residues. The tract at residues 131–347 (NLNTNFTFDT…GALKRVGAFA (217 aa)) is domain III, AAA+ region. Glycine 175, glycine 177, lysine 178, and threonine 179 together coordinate ATP. The domain IV, binds dsDNA stretch occupies residues 348–467 (QFTQQLVTVD…FNSLIRIITN (120 aa)).

This sequence belongs to the DnaA family. In terms of assembly, oligomerizes as a right-handed, spiral filament on DNA at oriC.

It is found in the cytoplasm. Its function is as follows. Plays an essential role in the initiation and regulation of chromosomal replication. ATP-DnaA binds to the origin of replication (oriC) to initiate formation of the DNA replication initiation complex once per cell cycle. Binds the DnaA box (a 9 base pair repeat at the origin) and separates the double-stranded (ds)DNA. Forms a right-handed helical filament on oriC DNA; dsDNA binds to the exterior of the filament while single-stranded (ss)DNA is stabiized in the filament's interior. The ATP-DnaA-oriC complex binds and stabilizes one strand of the AT-rich DNA unwinding element (DUE), permitting loading of DNA polymerase. After initiation quickly degrades to an ADP-DnaA complex that is not apt for DNA replication. Binds acidic phospholipids. The protein is Chromosomal replication initiator protein DnaA of Hydrogenovibrio crunogenus (strain DSM 25203 / XCL-2) (Thiomicrospira crunogena).